Here is a 472-residue protein sequence, read N- to C-terminus: Argininosuccinate lyase (472 aa).

Belongs to the lyase 1 family. Argininosuccinate lyase subfamily.

The protein localises to the cytoplasm. The enzyme catalyses 2-(N(omega)-L-arginino)succinate = fumarate + L-arginine. It functions in the pathway amino-acid biosynthesis; L-arginine biosynthesis; L-arginine from L-ornithine and carbamoyl phosphate: step 3/3. The polypeptide is Argininosuccinate lyase (Syntrophus aciditrophicus (strain SB)).